The primary structure comprises 98 residues: NADH-ubiquinone oxidoreductase chain 4L (98 aa).

Helical transmembrane passes span 1-21 (MSMVYFNIFMAFTVSLVGLLM), 29-49 (SLLCLEGMMLSLFVLMSMTIL), and 61-81 (IILLVFAACEAALGLSLLVMV).

Belongs to the complex I subunit 4L family. In terms of assembly, core subunit of respiratory chain NADH dehydrogenase (Complex I) which is composed of 45 different subunits.

Its subcellular location is the mitochondrion inner membrane. It carries out the reaction a ubiquinone + NADH + 5 H(+)(in) = a ubiquinol + NAD(+) + 4 H(+)(out). In terms of biological role, core subunit of the mitochondrial membrane respiratory chain NADH dehydrogenase (Complex I) which catalyzes electron transfer from NADH through the respiratory chain, using ubiquinone as an electron acceptor. Part of the enzyme membrane arm which is embedded in the lipid bilayer and involved in proton translocation. In Otaria byronia (South American sea lion), this protein is NADH-ubiquinone oxidoreductase chain 4L (MT-ND4L).